Reading from the N-terminus, the 175-residue chain is Large ribosomal subunit protein uL10 (175 aa).

Belongs to the universal ribosomal protein uL10 family. In terms of assembly, part of the ribosomal stalk of the 50S ribosomal subunit. The N-terminus interacts with L11 and the large rRNA to form the base of the stalk. The C-terminus forms an elongated spine to which L12 dimers bind in a sequential fashion forming a multimeric L10(L12)X complex.

Functionally, forms part of the ribosomal stalk, playing a central role in the interaction of the ribosome with GTP-bound translation factors. The protein is Large ribosomal subunit protein uL10 of Psychrobacter cryohalolentis (strain ATCC BAA-1226 / DSM 17306 / VKM B-2378 / K5).